Consider the following 275-residue polypeptide: Large ribosomal subunit protein uL2 (275 aa).

The segment at valine 221–lysine 275 is disordered.

Belongs to the universal ribosomal protein uL2 family. As to quaternary structure, part of the 50S ribosomal subunit. Forms a bridge to the 30S subunit in the 70S ribosome.

Its function is as follows. One of the primary rRNA binding proteins. Required for association of the 30S and 50S subunits to form the 70S ribosome, for tRNA binding and peptide bond formation. It has been suggested to have peptidyltransferase activity; this is somewhat controversial. Makes several contacts with the 16S rRNA in the 70S ribosome. This chain is Large ribosomal subunit protein uL2, found in Desulfosudis oleivorans (strain DSM 6200 / JCM 39069 / Hxd3) (Desulfococcus oleovorans).